Reading from the N-terminus, the 237-residue chain is Octopine transport system permease protein OccQ (237 aa).

Positions 22–222 (TAMTMAVAFS…LITFVSGQVF (201 aa)) constitute an ABC transmembrane type-1 domain. 4 consecutive transmembrane segments (helical) span residues 26–46 (MAVA…GAAA), 72–92 (LVIY…ASLF), 96–116 (GFVG…VSGA), and 202–222 (SFYL…GQVF).

This sequence belongs to the binding-protein-dependent transport system permease family. HisMQ subfamily.

The protein resides in the cell inner membrane. Component of the octopine active transport system probably consisting of four subunits: Q, M, P and T. The chain is Octopine transport system permease protein OccQ (occQ) from Agrobacterium tumefaciens (strain Ach5).